The primary structure comprises 495 residues: Heterogeneous nuclear ribonucleoprotein Q (495 aa).

The span at M1–R10 shows a compositional bias: basic and acidic residues. The disordered stretch occupies residues M1–D101. Composition is skewed to acidic residues over residues V11–V46 and M67–D101. RRM domains follow at residues S116–T194, N196–P278, and K292–P368. Residues M452–Y495 are disordered. A compositionally biased stretch (basic and acidic residues) spans D478–R487.

As to quaternary structure, interacts with LHP1 in the nucleus on a common set of chromatin regions. Predominantly expressed in vascular and meristematic tissues. Expressed throughout development in seedlings, roots, leaves, floral buds and siliques.

Its subcellular location is the nucleus. It localises to the cytoplasm. It is found in the microsome. In terms of biological role, transcriptional activator that binds DNA on GAGA-like motif and 5'-(C/G)ACGTG(G/T)C(A/G)-3' consensus motif in the promoters of target genes. Component of ribonucleosomes, which are complexes of at least 20 other different heterogeneous nuclear ribonucleoproteins (hnRNP). hnRNP play an important role in processing of precursor mRNA in the nucleus. Required during flower development and for cell fate determination. Acts both as an antagonist and as a promoter of polycomb LHP1 gene regulation activity, depending of target genes, to regulate the transcription of stress-responsive and flowering genes. May regulate histone H3 trimethylation on lysine 27 (H3K27me3). Recognizes and binds histone H3 tails methylated at 'Lys-4' (H3K4me) and acetylated at 'Lys-9' (H3K9ac), leading to epigenetic activation. When in complex with LHP1, recognizes and binds histone H3 tails methylated at 'Lys-4' (H3K4me) and 'Lys-27' (H3K27me), mostly corresponding to stress-responsive genes. May function as a suppressor of cell-autonomous immune responses involving glucosinolates, salicylic acid (SA) and jasmonic acid (JA) pathways toward pathogenic bacteria and fungi. In Arabidopsis thaliana (Mouse-ear cress), this protein is Heterogeneous nuclear ribonucleoprotein Q.